Here is a 197-residue protein sequence, read N- to C-terminus: Casparian strip membrane protein 5 (197 aa).

Residues 1–34 (MSTTIDMPGSSKAAKAGKPVLVTTPSRPGGWKKG) lie on the Cytoplasmic side of the membrane. A helical membrane pass occupies residues 35 to 55 (VAIMDFILRLGAIAAALGAAA). Topologically, residues 56 to 84 (TMGLSDQTLPFFTQFFQFEASYDSFTTFQ) are extracellular. Residues 85–105 (FFVITMALVAGYLVLSLPLSI) form a helical membrane-spanning segment. The Cytoplasmic segment spans residues 106–117 (VAVVRPHAAGPR). A helical membrane pass occupies residues 118–138 (LFLIILDTVFLTLATASGASA). The Extracellular portion of the chain corresponds to 139–171 (ASIVYLAHNGNQDTNWIAICNQFGDFCAQTSGA). Residues 172-192 (VVSSLVAVLVFVLLIVMSALV) form a helical membrane-spanning segment. The Cytoplasmic segment spans residues 193–197 (LGKKH).

This sequence belongs to the Casparian strip membrane proteins (CASP) family. Homodimer and heterodimers.

The protein resides in the cell membrane. In terms of biological role, regulates membrane-cell wall junctions and localized cell wall deposition. Required for establishment of the Casparian strip membrane domain (CSD) and the subsequent formation of Casparian strips, a cell wall modification of the root endodermis that determines an apoplastic barrier between the intraorganismal apoplasm and the extraorganismal apoplasm and prevents lateral diffusion. This is Casparian strip membrane protein 5 from Lotus japonicus (Lotus corniculatus var. japonicus).